Here is an 831-residue protein sequence, read N- to C-terminus: Multiphosphoryl transfer protein (831 aa).

Residues 1 to 90 (MLTIQFLCPL…EYIQVRFIDS (90 aa)) form the HPr domain. The Pros-phosphohistidine intermediate; for HPr activity role is filled by His-15. Position 15 is a phosphohistidine; by EI (His-15). A PTS EI region spans residues 119 to 650 (GNVLASGVGV…AVKSQLRQLD (532 aa)). His-298 (tele-phosphohistidine intermediate; for PTS EI activity) is an active-site residue. His-298 is subject to Phosphohistidine; by autocatalysis. Positions 405 and 441 each coordinate phosphoenolpyruvate. Positions 540 and 564 each coordinate Mg(2+). Residues 563-564 (ND) and Arg-574 contribute to the phosphoenolpyruvate site. The Proton donor; for EI activity role is filled by Cys-611. Residues 685–828 (PLLALENIFV…QSILTLLETE (144 aa)) enclose the PTS EIIA type-2 domain. Residue His-747 is the Tele-phosphohistidine intermediate; for PTS EIIA activity of the active site. Position 747 is a phosphohistidine; by HPr (His-747).

It belongs to the PEP-utilizing enzyme family. The cofactor is Mg(2+).

It localises to the cytoplasm. The catalysed reaction is L-histidyl-[protein] + phosphoenolpyruvate = N(pros)-phospho-L-histidyl-[protein] + pyruvate. The enzyme catalyses D-fructose(out) + N(pros)-phospho-L-histidyl-[protein] = D-fructose 1-phosphate(in) + L-histidyl-[protein]. Functionally, multifunctional protein that includes general (non sugar-specific) and sugar-specific components of the phosphoenolpyruvate-dependent sugar phosphotransferase system (sugar PTS). This major carbohydrate active transport system catalyzes the phosphorylation of incoming sugar substrates concomitantly with their translocation across the cell membrane. The enzyme II FryABC PTS system is involved in fructose transport. The sequence is that of Multiphosphoryl transfer protein (fryA) from Escherichia coli O6:H1 (strain CFT073 / ATCC 700928 / UPEC).